Consider the following 205-residue polypeptide: High frequency lysogenization protein HflD homolog (205 aa).

This sequence belongs to the HflD family.

The protein resides in the cytoplasm. It is found in the cell inner membrane. The sequence is that of High frequency lysogenization protein HflD homolog from Aliivibrio fischeri (strain MJ11) (Vibrio fischeri).